A 67-amino-acid polypeptide reads, in one-letter code: Large ribosomal subunit protein uL29 (67 aa).

It belongs to the universal ribosomal protein uL29 family.

This Acetivibrio thermocellus (strain ATCC 27405 / DSM 1237 / JCM 9322 / NBRC 103400 / NCIMB 10682 / NRRL B-4536 / VPI 7372) (Clostridium thermocellum) protein is Large ribosomal subunit protein uL29.